Consider the following 452-residue polypeptide: Probable receptor-like protein kinase At5g20050 (452 aa).

The signal sequence occupies residues 1–23; that stretch reads MEDKKANIIATILILALVVVIIA. At 24-33 the chain is on the extracellular side; that stretch reads ARVSLKLSKT. The chain crosses the membrane as a helical span at residues 34-54; it reads FYLIAGVDISLILAVICFLII. Topologically, residues 55 to 452 are cytoplasmic; sequence RSRYNKERKL…SSIISPISPR (398 aa). In terms of domain architecture, Protein kinase spans 103-392; that stretch reads DGFRSLIGKG…MVIEMLEGRV (290 aa). Residues 109 to 117 and lysine 131 contribute to the ATP site; that span reads IGKGGSGSV. The residue at position 178 (tyrosine 178) is a Phosphotyrosine. The active-site Proton acceptor is aspartate 236. Phosphothreonine is present on residues threonine 270 and threonine 275.

Belongs to the protein kinase superfamily. Ser/Thr protein kinase family.

The protein resides in the membrane. The catalysed reaction is L-seryl-[protein] + ATP = O-phospho-L-seryl-[protein] + ADP + H(+). It carries out the reaction L-threonyl-[protein] + ATP = O-phospho-L-threonyl-[protein] + ADP + H(+). This Arabidopsis thaliana (Mouse-ear cress) protein is Probable receptor-like protein kinase At5g20050.